The following is a 663-amino-acid chain: COBRA-like protein 9 (663 aa).

The N-terminal stretch at 1-23 is a signal peptide; the sequence is MGVLLPIFFGVLLLFTVTPPSMS. Asn-63, Asn-111, Asn-121, Asn-169, Asn-203, Asn-326, Asn-355, Asn-397, Asn-409, Asn-429, Asn-470, Asn-550, and Asn-561 each carry an N-linked (GlcNAc...) asparagine glycan. Residue Ser-638 is the site of GPI-anchor amidated serine attachment. The propeptide at 639 to 663 is removed in mature form; the sequence is GGRRNGAITVLSFITFYVAAFMVLL.

Belongs to the COBRA family. Expressed only in flowers.

Its subcellular location is the cell membrane. This chain is COBRA-like protein 9 (COBL9), found in Arabidopsis thaliana (Mouse-ear cress).